The following is a 573-amino-acid chain: Putative 15-O-acetyltransferase SAT12 (573 aa).

The tract at residues 1–40 (MLDDDCSPTSSSEMSNASSREASITSRSSSTSGNNSLPED) is disordered. Positions 7–36 (SPTSSSEMSNASSREASITSRSSSTSGNNS) are enriched in low complexity.

Belongs to the trichothecene O-acetyltransferase family.

It participates in mycotoxin biosynthesis. Putative 15-O-acetyltransferase; part of the satratoxin SC2 cluster involved in the biosynthesis of satratoxins, trichothecene mycotoxins that are associated with human food poisonings. Satratoxins are suggested to be made by products of multiple gene clusters (SC1, SC2 and SC3) that encode 21 proteins in all, including polyketide synthases, acetyltransferases, and other enzymes expected to modify the trichothecene skeleton. SC1 encodes 10 proteins, SAT1 to SAT10. The largest are SAT8, which encodes a putative polyketide synthase (PKS) with a conventional non-reducing architecture, and SAT10, a putative protein containing four ankyrin repeats and thus may be involved in protein scaffolding. The putative short-chain reductase SAT3 may assist the PKS in some capacity. SAT6 contains a secretory lipase domain and acts probably as a trichothecene esterase. SAT5 encodes a putative acetyltransferase, and so, with SAT6, may affect endogenous protection from toxicity. The probable transcription factor SAT9 may regulate the expression of the SC1 cluster. SC2 encodes proteins SAT11 to SAT16, the largest of which encodes the putative reducing PKS SAT13. SAT11 is a cytochrome P450 monooxygenase, while SAT14 and SAT16 are probable acetyltransferases. The SC2 cluster may be regulated by the transcription factor SAT15. SC3 is a small cluster that encodes 5 proteins, SAT17 to SAT21. SAT21 is a putative MFS-type transporter which may have a role in exporting secondary metabolites. The four other proteins putatively encoded in SC3 include the taurine hydroxylase-like protein SAT17, the O-methyltransferase SAT18, the acetyltransferase SAT19, and the Cys6-type zinc finger SAT20, the latter being probably involved in regulation of SC3 expression. In Stachybotrys chartarum (strain CBS 109288 / IBT 7711) (Toxic black mold), this protein is Putative 15-O-acetyltransferase SAT12.